Consider the following 526-residue polypeptide: MIFFYFLTLTSFISVAFSYNILGVFPFQAKSHFGFIDPLLVRLAELGHNVTIYDPYPKSEKLPNYNEIDVSECFVFNTLYEEIDTFIKTAASPFSSLWYSFEETLAVFQKENFDKCAPLRELLNSTVKYDLLITETFLTDITLLFVNKFKIPFITSTPNVPFPWLADRMGNPLNPSYIPNLFSDYPFDKMTFFNRLWNTLFYVMALGGHNAIILKNEEKINKYYFGSSVPSLYNIARETSIMLINAHETLNPVIPLVPGMIPVSGIHIKQPAALPQNIEKFINESTHGVVYFCMGSLLRGETFPAEKRDAFLYAFSKIPQRVLWKWEGEVLPGKSENIMTSKWMPQRDILAHPNVKLFISHGGLLGTSEAVYEGVPVIGIPIFGDQRTNIKALEANGAGELLDYNDISGEVVLEKIQRLINDPKYKESARQLSIRYKDRPMSPLDTAVYWTEYVIRHKGAPHLKTAAVDMPWYQYLLLDVIAFLIFILVSVILIIYYGVKISLRYLCALIFGNSSSLKPTKKVKDN.

Residues 1–474 are Lumenal-facing; that stretch reads MIFFYFLTLT…TAAVDMPWYQ (474 aa). N-linked (GlcNAc...) asparagine glycans are attached at residues Asn49, Asn124, and Asn283. The chain crosses the membrane as a helical span at residues 475 to 495; sequence YLLLDVIAFLIFILVSVILII. The Cytoplasmic segment spans residues 496–526; the sequence is YYGVKISLRYLCALIFGNSSSLKPTKKVKDN.

It belongs to the UDP-glycosyltransferase family.

The protein resides in the microsome membrane. Functionally, catalyzes the transfer of a glycosyl group from a UDP-sugar to an acceptor molecule. This is UDP-glycosyltransferase UGT5 from Dactylopius coccus (Cochineal).